We begin with the raw amino-acid sequence, 99 residues long: Acylphosphatase (99 aa).

Positions 5 to 97 constitute an Acylphosphatase-like domain; it reads IRQVMVRGRV…YAGERFSILS (93 aa). Catalysis depends on residues arginine 20 and asparagine 38.

It belongs to the acylphosphatase family.

The enzyme catalyses an acyl phosphate + H2O = a carboxylate + phosphate + H(+). This Rhodopseudomonas palustris (strain BisB5) protein is Acylphosphatase (acyP).